The chain runs to 273 residues: Testis-specific serine/threonine-protein kinase 6 (273 aa).

A Protein kinase domain is found at 12 to 267 (YKLGRTIGEG…AGQVARNCWL (256 aa)). Residues 18–26 (IGEGSYSKV) and lysine 41 contribute to the ATP site. Residue aspartate 135 is the Proton acceptor of the active site.

The protein belongs to the protein kinase superfamily. CAMK Ser/Thr protein kinase family. Microtubule inner protein component of sperm flagellar doublet microtubules. Interacts with HSP90; this interaction stabilizes and activates TSSK6. Interacts with the heat shock proteins HSPCB, HSPA8 and HSPA1A. These interactions appear to be required for TSSK6 kinase activity. Interacts with TSACC; this interaction is direct and recruits TSACC to HSP90, which is essential for kinase activity. The cofactor is Mg(2+). Post-translationally, autophosphorylated. Ubiquitinated; HSP90 activity negatively regulates ubiquitination and degradation. In terms of tissue distribution, highly expressed in testis. Expressed at lower levels in colon, small intestine, ovary, prostate, thymus, spleen and peripheral blood leukocytes.

The protein localises to the cytoplasm. It localises to the cytoskeleton. Its subcellular location is the flagellum axoneme. It is found in the nucleus. The catalysed reaction is L-seryl-[protein] + ATP = O-phospho-L-seryl-[protein] + ADP + H(+). The enzyme catalyses L-threonyl-[protein] + ATP = O-phospho-L-threonyl-[protein] + ADP + H(+). In terms of biological role, serine/threonine-protein kinase component of the sperm flagellar doublet microtubules. May act as a regulator of sperm motility by mediating phosphorylation of sperm doublet microtubule proteins. Plays a role in DNA condensation during postmeiotic chromatin remodeling and histone-to-protamine transition during spermatogenesis. The sequence is that of Testis-specific serine/threonine-protein kinase 6 from Homo sapiens (Human).